We begin with the raw amino-acid sequence, 216 residues long: MOB kinase activator-like 1 homolog B (216 aa).

4 residues coordinate Zn(2+): C79, C84, H161, and H166.

This sequence belongs to the MOB1/phocein family.

This is MOB kinase activator-like 1 homolog B (mobB) from Dictyostelium discoideum (Social amoeba).